The chain runs to 144 residues: Transcription antitermination protein NusB (144 aa).

This sequence belongs to the NusB family.

Its function is as follows. Involved in transcription antitermination. Required for transcription of ribosomal RNA (rRNA) genes. Binds specifically to the boxA antiterminator sequence of the ribosomal RNA (rrn) operons. The polypeptide is Transcription antitermination protein NusB (Buchnera aphidicola subsp. Baizongia pistaciae (strain Bp)).